Reading from the N-terminus, the 379-residue chain is Chaperone protein DnaJ (379 aa).

The J domain occupies 5-70; that stretch reads DYYESLGVAK…QKRAAYDQYG (66 aa). A CR-type zinc finger spans residues 134 to 212; that stretch reads GVTKEIRIPA…CHGHGRVEKS (79 aa). Residues Cys147, Cys150, Cys164, Cys167, Cys186, Cys189, Cys200, and Cys203 each contribute to the Zn(2+) site. 4 CXXCXGXG motif repeats span residues 147–154, 164–171, 186–193, and 200–207; these read CDVCHGNG, CPTCHGNG, CPHCHGRG, and CIKCHGHG.

It belongs to the DnaJ family. Homodimer. The cofactor is Zn(2+).

The protein resides in the cytoplasm. Functionally, participates actively in the response to hyperosmotic and heat shock by preventing the aggregation of stress-denatured proteins and by disaggregating proteins, also in an autonomous, DnaK-independent fashion. Unfolded proteins bind initially to DnaJ; upon interaction with the DnaJ-bound protein, DnaK hydrolyzes its bound ATP, resulting in the formation of a stable complex. GrpE releases ADP from DnaK; ATP binding to DnaK triggers the release of the substrate protein, thus completing the reaction cycle. Several rounds of ATP-dependent interactions between DnaJ, DnaK and GrpE are required for fully efficient folding. Also involved, together with DnaK and GrpE, in the DNA replication of plasmids through activation of initiation proteins. This Pectobacterium atrosepticum (strain SCRI 1043 / ATCC BAA-672) (Erwinia carotovora subsp. atroseptica) protein is Chaperone protein DnaJ.